The chain runs to 310 residues: Ceramide synthase LOH1 (310 aa).

The next 6 helical transmembrane spans lie at 16–36 (SFPT…FPTI), 85–105 (CIYY…EPWF), 131–151 (FLYM…VFWE), 157–177 (FGVS…SYIC), 216–236 (FVLF…FWIL), and 260–280 (YMFN…WVLI). The region spanning 76-289 (RKFKESAWKC…IYRMLVKQVQ (214 aa)) is the TLC domain. Residues Ser300 and Ser302 each carry the phosphoserine modification.

In terms of tissue distribution, expressed ubiquitously at high levels. Not observed in pollen.

The protein localises to the endoplasmic reticulum membrane. It catalyses the reaction (4R)-hydroxysphinganine + a fatty acyl-CoA = an N-acyl-(4R)-4-hydroxysphinganine + CoA + H(+). The enzyme catalyses hexacosanoyl-CoA + (4R)-hydroxysphinganine = N-hexacosanoyl-(4R)-hydroxysphinganine + CoA + H(+). It carries out the reaction tetracosanoyl-CoA + (4R)-hydroxysphinganine = N-tetracosanoyl-(4R)-hydroxysphinganine + CoA + H(+). The protein operates within sphingolipid metabolism. With respect to regulation, inhibited by the mycotoxin fumonisin B(1), a sphingosine analog mycotoxins produced by pathogenic fungi. Repressed by divalent cation such as magnesium Mg(2+), copper Cu(2+), zinc Zn(2+), manganese Mn(2+), calcium Ca(2+) and cobalt Co(2+). Essential for plant growth, promotes cell division in root meristems. Catalyzes the biosynthesis of ceramide sphingolipids with C(16) to C(28) fatty acids, structural membrane lipids involved in membrane trafficking (e.g. early endosomes) and cell polarity (e.g. polar auxin transport related proteins); mostly active with t18:0 and saturated very long saturated fatty acids (C24:0 and C26:0), such as long-chain base (LCB) phytosphingosine (t18:0), lignoceroyl- and hexacosanoyl-CoAs. Mediates resistance to sphinganine-analog mycotoxins (SAMs, e.g. fumonisin B(1)) by restoring the sphingolipid biosynthesis. Could salvage the transport of GPI-anchored proteins from the endoplasmic reticulum to the Golgi apparatus in ceramides-depleted cells after SAM exposure. May prevent precocious cell death by delaying PR1 accumulation during aging. Contributes to hypoxic conditions tolerance (e.g. submergences), especially in the dark, by promoting the formation of very-long-chain (VLC) ceramide species (22:1, 24:1 and 26:1) and of VLC unsaturated ceramides, which are modulating CTR1-mediated ethylene signaling leading to endoplasmic reticulum (ER)-to-nucleus translocation of EIN2 and EIN3. The sequence is that of Ceramide synthase LOH1 from Arabidopsis thaliana (Mouse-ear cress).